A 149-amino-acid polypeptide reads, in one-letter code: MKFLLINGPNLNLLGQREPLIYGSETLEKIELNLKKKAKLLGVELECFQSNSEGTLVDCIQQALGKVDAILINAGAYTHTSVALRDALLSTGIPYVELHLSNTHSRESFRQKSLLADRAIGIVSGFGAMSYSLALDGALDFLKSQKSGV.

The active-site Proton acceptor is the Y22. Residues N73, H79, and D86 each contribute to the substrate site. H99 acts as the Proton donor in catalysis. Residues 100 to 101 and R110 contribute to the substrate site; that span reads LS.

This sequence belongs to the type-II 3-dehydroquinase family. As to quaternary structure, homododecamer.

The enzyme catalyses 3-dehydroquinate = 3-dehydroshikimate + H2O. Its pathway is metabolic intermediate biosynthesis; chorismate biosynthesis; chorismate from D-erythrose 4-phosphate and phosphoenolpyruvate: step 3/7. Functionally, catalyzes a trans-dehydration via an enolate intermediate. This is 3-dehydroquinate dehydratase from Prochlorococcus marinus (strain SARG / CCMP1375 / SS120).